A 289-amino-acid chain; its full sequence is Formamidopyrimidine-DNA glycosylase (289 aa).

Pro-2 acts as the Schiff-base intermediate with DNA in catalysis. Catalysis depends on Glu-3, which acts as the Proton donor. The active-site Proton donor; for beta-elimination activity is Lys-61. DNA is bound by residues His-96, Arg-115, and Lys-161. The segment at 247–281 (SAYGQENLPCPRCGAPIKREKFMNRSSFSCPRCQP) adopts an FPG-type zinc-finger fold. Arg-271 functions as the Proton donor; for delta-elimination activity in the catalytic mechanism.

It belongs to the FPG family. Monomer. Zn(2+) serves as cofactor.

The catalysed reaction is Hydrolysis of DNA containing ring-opened 7-methylguanine residues, releasing 2,6-diamino-4-hydroxy-5-(N-methyl)formamidopyrimidine.. It carries out the reaction 2'-deoxyribonucleotide-(2'-deoxyribose 5'-phosphate)-2'-deoxyribonucleotide-DNA = a 3'-end 2'-deoxyribonucleotide-(2,3-dehydro-2,3-deoxyribose 5'-phosphate)-DNA + a 5'-end 5'-phospho-2'-deoxyribonucleoside-DNA + H(+). Involved in base excision repair of DNA damaged by oxidation or by mutagenic agents. Acts as a DNA glycosylase that recognizes and removes damaged bases. Has a preference for oxidized purines, such as 7,8-dihydro-8-oxoguanine (8-oxoG). Has AP (apurinic/apyrimidinic) lyase activity and introduces nicks in the DNA strand. Cleaves the DNA backbone by beta-delta elimination to generate a single-strand break at the site of the removed base with both 3'- and 5'-phosphates. The sequence is that of Formamidopyrimidine-DNA glycosylase from Rhodococcus erythropolis (strain PR4 / NBRC 100887).